A 142-amino-acid polypeptide reads, in one-letter code: Hemoglobin subunit alpha-4 (142 aa).

The 141-residue stretch at 2-142 (TLTDSDKAAI…VATVLTSKYR (141 aa)) folds into the Globin domain. O2 is bound at residue H59. Residue H88 participates in heme b binding.

This sequence belongs to the globin family. Heterotetramer of two alpha chains and two beta chains. Red blood cells.

This is a larval (tadpole) alpha-globin. The polypeptide is Hemoglobin subunit alpha-4 (hba4) (Xenopus laevis (African clawed frog)).